A 171-amino-acid polypeptide reads, in one-letter code: Mitochondrial import inner membrane translocase subunit Tim17-A (171 aa).

Cys-9 and Cys-78 are joined by a disulfide. 3 helical membrane-spanning segments follow: residues 17–37, 63–77, and 113–133; these read CGGA…IKGF, GGSF…SMID, and VGSA…GILL. The interval 144-171 is disordered; it reads GPQFAEDPSQLPSTQLPSSPFGDYRQYQ. Residues 151–163 show a composition bias toward low complexity; sequence PSQLPSTQLPSSP.

This sequence belongs to the Tim17/Tim22/Tim23 family. Component of the TIM23 complex at least composed of TIMM23, TIMM17 (TIMM17A or TIMM17B) and TIMM50. The complex interacts with the TIMM44 component of the PAM complex and with DNAJC15. Post-translationally, degraded by YMEL1 downstream of the integrated stress response (ISR).

The protein localises to the mitochondrion inner membrane. Essential component of the TIM23 complex, a complex that mediates the translocation of transit peptide-containing proteins across the mitochondrial inner membrane. In Homo sapiens (Human), this protein is Mitochondrial import inner membrane translocase subunit Tim17-A (TIMM17A).